A 250-amino-acid polypeptide reads, in one-letter code: 26 kDa periplasmic immunogenic protein (250 aa).

Residues 1-28 (MNTRASNFLAASFSTIMLVGAFSLPAFA) form the signal peptide.

It is found in the periplasm. This is 26 kDa periplasmic immunogenic protein (bp26) from Brucella melitensis biotype 1 (strain ATCC 23456 / CCUG 17765 / NCTC 10094 / 16M).